The chain runs to 299 residues: tRNA dimethylallyltransferase (299 aa).

Glycine 13–threonine 20 provides a ligand contact to ATP. Threonine 15–threonine 20 contributes to the substrate binding site. Positions aspartate 38 to glutamine 41 are interaction with substrate tRNA.

This sequence belongs to the IPP transferase family. In terms of assembly, monomer. It depends on Mg(2+) as a cofactor.

The catalysed reaction is adenosine(37) in tRNA + dimethylallyl diphosphate = N(6)-dimethylallyladenosine(37) in tRNA + diphosphate. Catalyzes the transfer of a dimethylallyl group onto the adenine at position 37 in tRNAs that read codons beginning with uridine, leading to the formation of N6-(dimethylallyl)adenosine (i(6)A). The sequence is that of tRNA dimethylallyltransferase from Prochlorococcus marinus (strain MIT 9313).